The sequence spans 412 residues: Phosphoglycerate kinase, plasmid (412 aa).

Residues 39-41 (DLN), arginine 55, 78-81 (HLGR), arginine 133, and arginine 166 each bind substrate. Residues lysine 217, glutamate 339, and 365–368 (GGDT) each bind ATP.

This sequence belongs to the phosphoglycerate kinase family. As to quaternary structure, monomer.

It is found in the cytoplasm. The catalysed reaction is (2R)-3-phosphoglycerate + ATP = (2R)-3-phospho-glyceroyl phosphate + ADP. Its pathway is carbohydrate biosynthesis; Calvin cycle. This chain is Phosphoglycerate kinase, plasmid (cbbKP), found in Cupriavidus necator (strain ATCC 17699 / DSM 428 / KCTC 22496 / NCIMB 10442 / H16 / Stanier 337) (Ralstonia eutropha).